We begin with the raw amino-acid sequence, 277 residues long: MTRIKAACLIGWPAAHSRSPMIHHYWLRTLGIEGGYAIESVPPEGFGEFVLHLSTHGYLGANVTIPHKERALLLTEPDARARAVGAANTLWYDGETLRSTNTDIEGFLNNLDACAPGWDGIDEALVLGAGGSSRAVVFGLIERGIKRIHLANRTLDRAQAVADQFNADVVPTAWQDLAAVLPRAKLLVNTTSLGMKGQPALEVDIGLLPTDAAVADLVYVPLETPLLAAARARGLATADGLGMLLHQAVRGFELWFGTRPSVTPELRALIEADLAPA.

Shikimate contacts are provided by residues 17–19 (SRS) and Thr-64. The active-site Proton acceptor is the Lys-68. Residues Asn-88 and Asp-103 each contribute to the shikimate site. NADP(+) is bound by residues 128–132 (GAGGS), 152–157 (NRTLDR), and Leu-217. Residue Tyr-219 coordinates shikimate. Gly-240 lines the NADP(+) pocket.

It belongs to the shikimate dehydrogenase family. As to quaternary structure, homodimer.

It catalyses the reaction shikimate + NADP(+) = 3-dehydroshikimate + NADPH + H(+). It functions in the pathway metabolic intermediate biosynthesis; chorismate biosynthesis; chorismate from D-erythrose 4-phosphate and phosphoenolpyruvate: step 4/7. In terms of biological role, involved in the biosynthesis of the chorismate, which leads to the biosynthesis of aromatic amino acids. Catalyzes the reversible NADPH linked reduction of 3-dehydroshikimate (DHSA) to yield shikimate (SA). This Rhodopseudomonas palustris (strain BisB18) protein is Shikimate dehydrogenase (NADP(+)).